The chain runs to 544 residues: Calcium-dependent protein kinase 6 (544 aa).

Positions M1 to Q47 are disordered. A lipid anchor (N-myristoyl glycine) is attached at G2. The segment covering S8–S25 has biased composition (basic and acidic residues). A compositionally biased stretch (low complexity) spans K26–T40. A Protein kinase domain is found at Y85 to I343. Residues L91–T99 and K114 each bind ATP. D209 serves as the catalytic Proton acceptor. S249 bears the Phosphoserine mark. Residues A349 to I379 form an autoinhibitory domain region. 4 EF-hand domains span residues E386–T421, L422–L457, E458–T493, and L497–G527. Residues D399, D401, S403, E410, D435, D437, S439, T441, E446, D471, D473, S475, Y477, E482, D505, D507, D509, R511, and E516 each contribute to the Ca(2+) site.

This sequence belongs to the protein kinase superfamily. Ser/Thr protein kinase family. CDPK subfamily. In terms of assembly, interacts with SLAC1. Interacts with FD. In terms of tissue distribution, expressed in both guard cells and mesophyll cells. Expressed in the shoot apical meristem.

Its subcellular location is the cell membrane. It localises to the nucleus. It catalyses the reaction L-seryl-[protein] + ATP = O-phospho-L-seryl-[protein] + ADP + H(+). The catalysed reaction is L-threonyl-[protein] + ATP = O-phospho-L-threonyl-[protein] + ADP + H(+). Its activity is regulated as follows. Activated by calcium. Autophosphorylation may play an important role in the regulation of the kinase activity. May play a role in signal transduction pathways that involve calcium as a second messenger. Functions in abscisic acid (ABA) regulation of guard cell S-type anion- and Ca(2+)-permeable channels and stomatal closure. Phosphorylates FD. The protein is Calcium-dependent protein kinase 6 (CPK6) of Arabidopsis thaliana (Mouse-ear cress).